Consider the following 305-residue polypeptide: Homoserine kinase (305 aa).

Residue 93 to 103 (PLARGLGSSAT) coordinates ATP.

It belongs to the GHMP kinase family. Homoserine kinase subfamily.

It is found in the cytoplasm. The catalysed reaction is L-homoserine + ATP = O-phospho-L-homoserine + ADP + H(+). Its pathway is amino-acid biosynthesis; L-threonine biosynthesis; L-threonine from L-aspartate: step 4/5. Catalyzes the ATP-dependent phosphorylation of L-homoserine to L-homoserine phosphate. This is Homoserine kinase from Trichodesmium erythraeum (strain IMS101).